An 81-amino-acid chain; its full sequence is Protein L83L (81 aa).

Residues 1 to 28 are disordered; the sequence is MDTSLKNNDGALDADNKNYQDYKDEPDK. The segment covering 14-28 has biased composition (basic and acidic residues); that stretch reads ADNKNYQDYKDEPDK.

It belongs to the asfivirus L83L family. Interacts with host IL1B.

It localises to the host cytoplasm. In terms of biological role, may subvert the host innate immune response by interacting with host IL1B and interfering with its function. The chain is Protein L83L from African swine fever virus (isolate Tick/South Africa/Pretoriuskop Pr4/1996) (ASFV).